A 400-amino-acid chain; its full sequence is Phosphoglycerate kinase (400 aa).

Residues 22-24, Arg-38, 61-64, Arg-119, and Arg-152 contribute to the substrate site; these read DFN and HLGR. Residues Lys-205, Gly-296, Glu-327, and 353-356 each bind ATP; that span reads GGDT.

Belongs to the phosphoglycerate kinase family. In terms of assembly, monomer.

The protein localises to the cytoplasm. The enzyme catalyses (2R)-3-phosphoglycerate + ATP = (2R)-3-phospho-glyceroyl phosphate + ADP. Its pathway is carbohydrate degradation; glycolysis; pyruvate from D-glyceraldehyde 3-phosphate: step 2/5. This is Phosphoglycerate kinase from Campylobacter jejuni subsp. doylei (strain ATCC BAA-1458 / RM4099 / 269.97).